Reading from the N-terminus, the 609-residue chain is Ataxin-10 homolog (609 aa).

3 disordered regions span residues 265-293, 405-426, and 461-490; these read KSTTESTTESTTTESTDSTTDSTTTTTTG, KQQEGEEDPVNQILNDPFSKDS, and SDTNKSSSSSSSSSSSTTTDGETVTSKGFN. Positions 266–292 are enriched in low complexity; sequence STTESTTESTTTESTDSTTDSTTTTTT. Residues 466–479 show a composition bias toward low complexity; that stretch reads SSSSSSSSSSSTTT. Positions 480–490 are enriched in polar residues; the sequence is DGETVTSKGFN.

This sequence belongs to the ATXN10 family.

May play a role in the regulation of cytokinesis. The polypeptide is Ataxin-10 homolog (atxn10) (Dictyostelium discoideum (Social amoeba)).